The chain runs to 330 residues: Aspartate--ammonia ligase (330 aa).

Belongs to the class-II aminoacyl-tRNA synthetase family. AsnA subfamily.

It is found in the cytoplasm. The enzyme catalyses L-aspartate + NH4(+) + ATP = L-asparagine + AMP + diphosphate + H(+). It participates in amino-acid biosynthesis; L-asparagine biosynthesis; L-asparagine from L-aspartate (ammonia route): step 1/1. The protein is Aspartate--ammonia ligase of Edwardsiella ictaluri (strain 93-146).